We begin with the raw amino-acid sequence, 397 residues long: Purine ribonucleoside efflux pump NepI (397 aa).

At 1-21 (MNENIAEKFRADGVARPNWSA) the chain is on the cytoplasmic side. The helical transmembrane segment at 22–42 (VFAVAFCVACLITVEFLPVSL) threads the bilayer. The Periplasmic portion of the chain corresponds to 43–54 (LTPMAQDLGISE). A helical membrane pass occupies residues 55-75 (GVAGQSVTVTAFVAMFSSLFI). Topologically, residues 76-85 (TQIIQATDRR) are cytoplasmic. The chain crosses the membrane as a helical span at residues 86–106 (YIVILFAVLLTASCLMVSFAN). A topological domain (periplasmic) is located at residue serine 107. The helical transmembrane segment at 108-128 (FTLLLLGRACLGLALGGFWAI) threads the bilayer. The Cytoplasmic segment spans residues 129 to 147 (SASLTMRLVPARTVPKALS). Residues 148–168 (VIFGAVSIALVIAAPLGSFLG) form a helical membrane-spanning segment. The Periplasmic segment spans residues 169 to 175 (GIIGWRN). The helical transmembrane segment at 176–196 (VFNAAAVMGVLCVIWVVKSLP) threads the bilayer. Residues 197 to 215 (SLPGEPSHQKQNMFSLLQR) are Cytoplasmic-facing. A helical transmembrane segment spans residues 216-236 (PGVMAGMIAIFMSFAGQFAFF). The Periplasmic segment spans residues 237 to 255 (TYIRPVYMNLAGFDVDGLT). Residues 256-276 (LVLLSFGIASFVGTSFSSYVL) traverse the membrane as a helical segment. At 277–281 (KRSVK) the chain is on the cytoplasmic side. The chain crosses the membrane as a helical span at residues 282 to 302 (LALAGAPLLLALSALTLIVWG). Residues 303–305 (SDK) are Periplasmic-facing. The chain crosses the membrane as a helical span at residues 306–326 (TVAAAIAIIWGLAFALVPVGW). Residues 327–343 (STWITRSLADQAEKAGS) are Cytoplasmic-facing. A helical transmembrane segment spans residues 344–364 (IQVAVIQLANTCGAAVGGYAL). The Periplasmic segment spans residues 365–366 (DN). A helical transmembrane segment spans residues 367–387 (FGLLSPLALSGGLMLLTALVV). At 388–397 (AAKVRITPMS) the chain is on the cytoplasmic side.

This sequence belongs to the major facilitator superfamily. DHA1 family. NepI (TC 2.A.1.2.26) subfamily.

Its subcellular location is the cell inner membrane. It catalyses the reaction inosine(in) + H(+)(out) = inosine(out) + H(+)(in). The catalysed reaction is guanosine(in) + H(+)(out) = guanosine(out) + H(+)(in). Functionally, involved in the efflux of purine ribonucleosides, such as inosine and guanosine. In Salmonella paratyphi A (strain ATCC 9150 / SARB42), this protein is Purine ribonucleoside efflux pump NepI.